Consider the following 108-residue polypeptide: Small ribosomal subunit protein uS10 (108 aa).

The protein belongs to the universal ribosomal protein uS10 family. Part of the 30S ribosomal subunit.

Functionally, involved in the binding of tRNA to the ribosomes. This is Small ribosomal subunit protein uS10 from Mycoplasma pneumoniae (strain ATCC 29342 / M129 / Subtype 1) (Mycoplasmoides pneumoniae).